Reading from the N-terminus, the 379-residue chain is Beta sliding clamp (379 aa).

It belongs to the beta sliding clamp family. As to quaternary structure, forms a ring-shaped head-to-tail homodimer around DNA which binds and tethers DNA polymerases and other proteins to the DNA. The DNA replisome complex has a single clamp-loading complex (3 tau and 1 each of delta, delta', psi and chi subunits) which binds 3 Pol III cores (1 core on the leading strand and 2 on the lagging strand) each with a beta sliding clamp dimer. Additional proteins in the replisome are other copies of gamma, psi and chi, Ssb, DNA helicase and RNA primase.

The protein resides in the cytoplasm. Its function is as follows. Confers DNA tethering and processivity to DNA polymerases and other proteins. Acts as a clamp, forming a ring around DNA (a reaction catalyzed by the clamp-loading complex) which diffuses in an ATP-independent manner freely and bidirectionally along dsDNA. Initially characterized for its ability to contact the catalytic subunit of DNA polymerase III (Pol III), a complex, multichain enzyme responsible for most of the replicative synthesis in bacteria; Pol III exhibits 3'-5' exonuclease proofreading activity. The beta chain is required for initiation of replication as well as for processivity of DNA replication. The sequence is that of Beta sliding clamp (dnaN) from Rickettsia felis (strain ATCC VR-1525 / URRWXCal2) (Rickettsia azadi).